The following is a 209-amino-acid chain: Probable calcium-binding protein CML36 (209 aa).

The interval 22–59 (SKSPTAFSFGSASSSSGQDCKNSGGDGGGGSVTPTSIL) is disordered. The span at 27 to 38 (AFSFGSASSSSG) shows a compositional bias: low complexity. 4 EF-hand domains span residues 66-101 (YSYVEILQAFKLIDRDNDGAVSRHDLESLLSRLGPD), 103-138 (LTEEEINVMLKEVDCDGDGTIRLEELASRVVSLDPA), 139-174 (RDSTELKETFEFFDADRDGLISADELLRVFSTIGDE), and 176-209 (CTLDDCKRMIADVDEDGDGFVCFTEFSRMMDLQR). Ca(2+)-binding residues include Asp-79, Asp-81, Asp-83, and Asp-90. Ca(2+) is bound by residues Asp-152, Asp-154, Asp-156, Glu-163, Asp-189, Asp-191, Asp-193, and Glu-200.

Functionally, potential calcium sensor. In Arabidopsis thaliana (Mouse-ear cress), this protein is Probable calcium-binding protein CML36 (CML36).